The following is a 175-amino-acid chain: Interleukin-10 (175 aa).

An N-terminal signal peptide occupies residues 1–21 (MQTCCQALLLLLAACTLPAHC). Cystine bridges form between Cys26–Cys123 and Cys77–Cys129.

The protein belongs to the IL-10 family. In terms of assembly, homodimer. Interacts with IL10RA and IL10RB. As to expression, expressed predominantly in bursa of Fabricius and cecal tonsils with low levels in thymus, liver and lung.

It localises to the secreted. Functionally, major immune regulatory cytokine that acts on many cells of the immune system where it has profound anti-inflammatory functions, limiting excessive tissue disruption caused by inflammation. Mechanistically, IL10 binds to its heterotetrameric receptor comprising IL10RA and IL10RB leading to JAK1 and STAT2-mediated phosphorylation of STAT3. In turn, STAT3 translocates to the nucleus where it drives expression of anti-inflammatory mediators. Targets antigen-presenting cells (APCs) such as macrophages and monocytes and inhibits their release of pro-inflammatory cytokines including granulocyte-macrophage colony-stimulating factor /GM-CSF, granulocyte colony-stimulating factor/G-CSF, IL-1 alpha, IL-1 beta, IL-6, IL-8 and TNF-alpha. Also interferes with antigen presentation by reducing the expression of MHC-class II and co-stimulatory molecules, thereby inhibiting their ability to induce T cell activation. In addition, controls the inflammatory response of macrophages by reprogramming essential metabolic pathways including mTOR signaling. In Gallus gallus (Chicken), this protein is Interleukin-10.